We begin with the raw amino-acid sequence, 382 residues long: Succinate--CoA ligase [ADP-forming] subunit beta (382 aa).

The ATP-grasp domain maps to 9-240 (KELFAKYGVK…PRDITEFEAY (232 aa)). Residues Lys45, 52–54 (GRG), Leu94, and Glu99 each bind ATP. The Mg(2+) site is built by Asn193 and Asp207. Substrate is bound by residues Asn260 and 317-319 (GIT).

The protein belongs to the succinate/malate CoA ligase beta subunit family. Heterotetramer of two alpha and two beta subunits. It depends on Mg(2+) as a cofactor.

The enzyme catalyses succinate + ATP + CoA = succinyl-CoA + ADP + phosphate. It catalyses the reaction GTP + succinate + CoA = succinyl-CoA + GDP + phosphate. The protein operates within carbohydrate metabolism; tricarboxylic acid cycle; succinate from succinyl-CoA (ligase route): step 1/1. Succinyl-CoA synthetase functions in the citric acid cycle (TCA), coupling the hydrolysis of succinyl-CoA to the synthesis of either ATP or GTP and thus represents the only step of substrate-level phosphorylation in the TCA. The beta subunit provides nucleotide specificity of the enzyme and binds the substrate succinate, while the binding sites for coenzyme A and phosphate are found in the alpha subunit. This chain is Succinate--CoA ligase [ADP-forming] subunit beta, found in Pyrobaculum calidifontis (strain DSM 21063 / JCM 11548 / VA1).